A 506-amino-acid chain; its full sequence is Histidine ammonia-lyase (506 aa).

The 5-imidazolinone (Ala-Gly) cross-link spans 141-143 (ASG). Ser142 is modified (2,3-didehydroalanine (Ser)).

The protein belongs to the PAL/histidase family. Post-translationally, contains an active site 4-methylidene-imidazol-5-one (MIO), which is formed autocatalytically by cyclization and dehydration of residues Ala-Ser-Gly.

It is found in the cytoplasm. It catalyses the reaction L-histidine = trans-urocanate + NH4(+). It participates in amino-acid degradation; L-histidine degradation into L-glutamate; N-formimidoyl-L-glutamate from L-histidine: step 1/3. The sequence is that of Histidine ammonia-lyase from Burkholderia multivorans (strain ATCC 17616 / 249).